We begin with the raw amino-acid sequence, 791 residues long: Phenylalanine--tRNA ligase beta subunit (791 aa).

Residues 39–147 enclose the tRNA-binding domain; sequence GDALGQVVVA…DDAPVGQALA (109 aa). In terms of domain architecture, B5 spans 400–475; that stretch reads PQPASILLRR…RIHGYDRVPT (76 aa). Mg(2+) is bound by residues Asp-453, Asp-459, Glu-462, and Glu-463. Positions 697 to 790 constitute an FDX-ACB domain; sequence SRYPSMRRDL…IEREHRARIR (94 aa).

Belongs to the phenylalanyl-tRNA synthetase beta subunit family. Type 1 subfamily. As to quaternary structure, tetramer of two alpha and two beta subunits. Mg(2+) is required as a cofactor.

It is found in the cytoplasm. It carries out the reaction tRNA(Phe) + L-phenylalanine + ATP = L-phenylalanyl-tRNA(Phe) + AMP + diphosphate + H(+). This Xanthomonas campestris pv. campestris (strain 8004) protein is Phenylalanine--tRNA ligase beta subunit.